A 166-amino-acid polypeptide reads, in one-letter code: Large ribosomal subunit protein uL18c (166 aa).

A chloroplast-targeting transit peptide spans Met-1–Ala-44.

It belongs to the universal ribosomal protein uL18 family. As to quaternary structure, component of the chloroplast large ribosomal subunit (LSU). Mature 70S chloroplast ribosomes of higher plants consist of a small (30S) and a large (50S) subunit. The 30S small subunit contains 1 molecule of ribosomal RNA (16S rRNA) and 24 different proteins. The 50S large subunit contains 3 rRNA molecules (23S, 5S and 4.5S rRNA) and 33 different proteins.

It is found in the plastid. The protein resides in the chloroplast. Its function is as follows. Component of the chloroplast ribosome (chloro-ribosome), a dedicated translation machinery responsible for the synthesis of chloroplast genome-encoded proteins, including proteins of the transcription and translation machinery and components of the photosynthetic apparatus. The chain is Large ribosomal subunit protein uL18c (RPL18) from Spinacia oleracea (Spinach).